The sequence spans 111 residues: 2Fe-2S ferredoxin (111 aa).

In terms of domain architecture, 2Fe-2S ferredoxin-type spans 5–107 (IKVTFVINNG…GIKVRLPSAT (103 aa)). 4 residues coordinate [2Fe-2S] cluster: Cys-42, Cys-48, Cys-51, and Cys-88.

This sequence belongs to the adrenodoxin/putidaredoxin family. It depends on [2Fe-2S] cluster as a cofactor.

Ferredoxin are iron-sulfur proteins that transfer electrons in a wide variety of metabolic reactions. This is 2Fe-2S ferredoxin (fdxB) from Rickettsia bellii (strain RML369-C).